Here is a 91-residue protein sequence, read N- to C-terminus: Potassium channel toxin Meg-beta-KTx1 (91 aa).

Residues 1 to 19 form the signal peptide; sequence MQRNLVVLLFLGMVALSSC. A propeptide spanning residues 20 to 27 is cleaved from the precursor; that stretch reads GLREKHFQ. Positions 54 to 91 constitute a BetaSPN-type CS-alpha/beta domain; that stretch reads QFGCPAYQGYCDDHCQDIKKQEGFCHGFKCKCGIPMGF. Intrachain disulfides connect cysteine 57/cysteine 78, cysteine 64/cysteine 83, and cysteine 68/cysteine 85.

This sequence belongs to the long chain scorpion toxin family. Class 1 subfamily. In terms of tissue distribution, expressed by the venom gland.

Its subcellular location is the secreted. Functionally, inhibits voltage-gated potassium channel. In Mesobuthus gibbosus (Mediterranean checkered scorpion), this protein is Potassium channel toxin Meg-beta-KTx1.